Here is a 207-residue protein sequence, read N- to C-terminus: Fibroblast growth factor 18 (207 aa).

The first 27 residues, 1-27, serve as a signal peptide directing secretion; that stretch reads MYSAPSTCTCLCLHFLLLCFQVQVLAA. The N-linked (GlcNAc...) asparagine glycan is linked to N39. The cysteines at positions 109 and 127 are disulfide-linked. N137 carries N-linked (GlcNAc...) asparagine glycosylation.

Belongs to the heparin-binding growth factors family. As to quaternary structure, interacts with FGFR3 and FGFR4.

Its subcellular location is the secreted. Plays an important role in the regulation of cell proliferation, cell differentiation and cell migration. Required for normal ossification and bone development. Stimulates hepatic and intestinal proliferation. The protein is Fibroblast growth factor 18 (FGF18) of Bos taurus (Bovine).